The following is a 244-amino-acid chain: Small ribosomal subunit protein uS3 (244 aa).

The KH type-2 domain maps to 39-107 (VREMLRKKLA…PAHINVTEVR (69 aa)). The interval 213–244 (VGQEKQDDSPRNDRNDRGDRGDRPSRPAREAR) is disordered. A compositionally biased stretch (basic and acidic residues) spans 216-244 (EKQDDSPRNDRNDRGDRGDRPSRPAREAR).

This sequence belongs to the universal ribosomal protein uS3 family. In terms of assembly, part of the 30S ribosomal subunit. Forms a tight complex with proteins S10 and S14.

In terms of biological role, binds the lower part of the 30S subunit head. Binds mRNA in the 70S ribosome, positioning it for translation. The chain is Small ribosomal subunit protein uS3 from Xanthomonas campestris pv. campestris (strain 8004).